Consider the following 388-residue polypeptide: Probable E3 ubiquitin-protein ligase LOG2 (388 aa).

The segment at Met-1 to Ile-43 is disordered. Residue Gly-2 is the site of N-myristoyl glycine attachment. A compositionally biased stretch (pro residues) spans Ala-22–Pro-40. The segment at Phe-159–Gln-281 is DAR2 domain. The RING-type; atypical zinc-finger motif lies at Cys-319 to Arg-358. Residues Lys-368–Glu-388 form a disordered region.

This sequence belongs to the RING-type zinc finger family. LOG2 subfamily. As to quaternary structure, interacts with GDU1. In terms of processing, myristoylated (in vitro). In terms of tissue distribution, expressed in the vascular tissues in both phloem and xylem parenchyma cells.

The protein resides in the cell membrane. The catalysed reaction is S-ubiquitinyl-[E2 ubiquitin-conjugating enzyme]-L-cysteine + [acceptor protein]-L-lysine = [E2 ubiquitin-conjugating enzyme]-L-cysteine + N(6)-ubiquitinyl-[acceptor protein]-L-lysine.. It functions in the pathway protein modification; protein ubiquitination. In terms of biological role, acts as an E3 ubiquitin-protein ligase, or as part of E3 complex, which accepts ubiquitin from specific E2 ubiquitin-conjugating enzymes and then transfers it to substrates (in vitro). Required for GLUTAMINE DUMPER 1(GDU1)-induced amino acid secretion and for amino acid homeostasis. Ubiquitinates GDU1 (in vitro). In Arabidopsis thaliana (Mouse-ear cress), this protein is Probable E3 ubiquitin-protein ligase LOG2 (LOG2).